The sequence spans 230 residues: Pyridoxal phosphate homeostasis protein (230 aa).

Lysine 36 carries the N6-(pyridoxal phosphate)lysine modification.

This sequence belongs to the pyridoxal phosphate-binding protein YggS/PROSC family.

Perhaps involved in proline biosynthesis. Its function is as follows. Pyridoxal 5'-phosphate (PLP)-binding protein, which is involved in PLP homeostasis. This chain is Pyridoxal phosphate homeostasis protein, found in Pseudomonas aeruginosa (strain ATCC 15692 / DSM 22644 / CIP 104116 / JCM 14847 / LMG 12228 / 1C / PRS 101 / PAO1).